Reading from the N-terminus, the 89-residue chain is MALDPAVKQQIIKEYATHEGDTGSPEVQIAVLSRRIKDLTEHLKEHKHDHHTRRGLMGLVGRRRRMLGYLQNVDIERYRALIERLGLRK.

Belongs to the universal ribosomal protein uS15 family. Part of the 30S ribosomal subunit. Forms a bridge to the 50S subunit in the 70S ribosome, contacting the 23S rRNA.

Its function is as follows. One of the primary rRNA binding proteins, it binds directly to 16S rRNA where it helps nucleate assembly of the platform of the 30S subunit by binding and bridging several RNA helices of the 16S rRNA. In terms of biological role, forms an intersubunit bridge (bridge B4) with the 23S rRNA of the 50S subunit in the ribosome. This Micrococcus luteus (strain ATCC 4698 / DSM 20030 / JCM 1464 / CCM 169 / CCUG 5858 / IAM 1056 / NBRC 3333 / NCIMB 9278 / NCTC 2665 / VKM Ac-2230) (Micrococcus lysodeikticus) protein is Small ribosomal subunit protein uS15.